Consider the following 315-residue polypeptide: Glutamyl-Q tRNA(Asp) synthetase (315 aa).

L-glutamate is bound by residues Arg23–Ser27 and Glu59. Positions Pro26–Ser36 match the 'HIGH' region motif. Residues Cys115, Cys117, Tyr142, and Cys146 each contribute to the Zn(2+) site. Tyr202 and Arg220 together coordinate L-glutamate. Residues Lys258 to Gln262 carry the 'KMSKS' region motif. Position 261 (Lys261) interacts with ATP.

This sequence belongs to the class-I aminoacyl-tRNA synthetase family. GluQ subfamily. Zn(2+) is required as a cofactor.

Its function is as follows. Catalyzes the tRNA-independent activation of glutamate in presence of ATP and the subsequent transfer of glutamate onto a tRNA(Asp). Glutamate is transferred on the 2-amino-5-(4,5-dihydroxy-2-cyclopenten-1-yl) moiety of the queuosine in the wobble position of the QUC anticodon. This Ralstonia nicotianae (strain ATCC BAA-1114 / GMI1000) (Ralstonia solanacearum) protein is Glutamyl-Q tRNA(Asp) synthetase.